A 201-amino-acid chain; its full sequence is Holliday junction branch migration complex subunit RuvA (201 aa).

Positions 1–64 are domain I; it reads MFNSISGILS…EDQMRLFGFP (64 aa). The domain II stretch occupies residues 65–140; that stretch reads NQAERSLFLD…KLTNLNEVSS (76 aa). A flexible linker region spans residues 140-144; it reads SKGQA. Residues 145–201 are domain III; that stretch reads SVSCEYEDIVTALTEMGFERKSVIVQVEKIAEEMKAAGSDPLKNEEELFRRSIVALS.

Belongs to the RuvA family. In terms of assembly, homotetramer. Forms an RuvA(8)-RuvB(12)-Holliday junction (HJ) complex. HJ DNA is sandwiched between 2 RuvA tetramers; dsDNA enters through RuvA and exits via RuvB. An RuvB hexamer assembles on each DNA strand where it exits the tetramer. Each RuvB hexamer is contacted by two RuvA subunits (via domain III) on 2 adjacent RuvB subunits; this complex drives branch migration. In the full resolvosome a probable DNA-RuvA(4)-RuvB(12)-RuvC(2) complex forms which resolves the HJ.

The protein localises to the cytoplasm. The RuvA-RuvB-RuvC complex processes Holliday junction (HJ) DNA during genetic recombination and DNA repair, while the RuvA-RuvB complex plays an important role in the rescue of blocked DNA replication forks via replication fork reversal (RFR). RuvA specifically binds to HJ cruciform DNA, conferring on it an open structure. The RuvB hexamer acts as an ATP-dependent pump, pulling dsDNA into and through the RuvAB complex. HJ branch migration allows RuvC to scan DNA until it finds its consensus sequence, where it cleaves and resolves the cruciform DNA. The chain is Holliday junction branch migration complex subunit RuvA from Treponema denticola (strain ATCC 35405 / DSM 14222 / CIP 103919 / JCM 8153 / KCTC 15104).